Reading from the N-terminus, the 163-residue chain is Nucleotide-binding protein HDEF_1968 (163 aa).

This sequence belongs to the YajQ family.

Functionally, nucleotide-binding protein. In Hamiltonella defensa subsp. Acyrthosiphon pisum (strain 5AT), this protein is Nucleotide-binding protein HDEF_1968.